The chain runs to 614 residues: Membrane protein insertase YidC (614 aa).

Residues 6 to 26 (IVLLIIFSTSLLFLWDAWIKE) form a helical membrane-spanning segment. Polar residues-rich tracts occupy residues 34–48 (PAIT…STQS) and 60–70 (ELTSSQASPDT). A disordered region spans residues 34–87 (PAITQADSSAGSTQSRNDDSLPVPGSELTSSQASPDTNGIPASGGNGDSVTPRL). A run of 4 helical transmembrane segments spans residues 380–400 (WGVA…PLSA), 450–470 (FPIL…LAAV), 484–504 (LSSP…MFVQ), and 524–544 (PVAF…YSLV). Residues 562–614 (TAPSKDTPEPPVSKQVNSSENPETTANSPADSPKQPQTPANNPRKMYKRTRKK) are disordered. Residues 575 to 602 (KQVNSSENPETTANSPADSPKQPQTPAN) show a composition bias toward polar residues.

It belongs to the OXA1/ALB3/YidC family. Type 1 subfamily. Interacts with the Sec translocase complex via SecD. Specifically interacts with transmembrane segments of nascent integral membrane proteins during membrane integration.

It is found in the cell inner membrane. Functionally, required for the insertion and/or proper folding and/or complex formation of integral membrane proteins into the membrane. Involved in integration of membrane proteins that insert both dependently and independently of the Sec translocase complex, as well as at least some lipoproteins. Aids folding of multispanning membrane proteins. The sequence is that of Membrane protein insertase YidC from Nitrosomonas europaea (strain ATCC 19718 / CIP 103999 / KCTC 2705 / NBRC 14298).